The primary structure comprises 310 residues: B3 domain-containing transcription factor NGA1 (310 aa).

The segment at 1 to 26 (MMTDLSLTRDEDEEEAKPLAEEEGAR) is disordered. Residues 16-26 (AKPLAEEEGAR) are compositionally biased toward basic and acidic residues. A DNA-binding region (TF-B3) is located at residues 35–141 (FDKVVTPSDV…RLFIDWRRRP (107 aa)). A compositionally biased stretch (low complexity) spans 251 to 268 (ESGMTNSTEEESSSSGGS). Residues 251-310 (ESGMTNSTEEESSSSGGSLPRGGGGGASSSSFFQLRLGSSSEDDHFTKKGKSSLSFDLDQ) form a disordered region.

As to quaternary structure, interacts with BRX. Interacts with BZIP30.

It localises to the nucleus. Regulates lateral organ growth. Functionally redundant with NGA2, NGA3 and NGA4. The polypeptide is B3 domain-containing transcription factor NGA1 (NGA1) (Arabidopsis thaliana (Mouse-ear cress)).